Consider the following 289-residue polypeptide: Rhodopsin (289 aa).

Topologically, residues 1-7 (YLVSPAG) are extracellular. A helical membrane pass occupies residues 8-32 (YAALGAYMFLLILVGFPVNFLTLYV). The Cytoplasmic segment spans residues 33–44 (TLEHKKLRTPLN). A helical transmembrane segment spans residues 45 to 67 (YILLNLAVADLFMVLGGFTTTMY). The Extracellular portion of the chain corresponds to 68–81 (TSMHGYFVLGRLGC). A disulfide bond links Cys81 and Cys158. Residues 82–104 (NLEGFFVTLGGEIALWSLVVLAI) form a helical membrane-spanning segment. The short motif at 105–107 (ERW) is the 'Ionic lock' involved in activated form stabilization element. Over 105–123 (ERWIGVFKSIRNFRFTEDH) the chain is Cytoplasmic. Residues 124-144 (AIMGLGFSWVMAATCAVPPLV) traverse the membrane as a helical segment. The Extracellular portion of the chain corresponds to 145 to 173 (GWLRYIPEGMQCSCGVDYYTRAEGFNNES). N-linked (GlcNAc...) asparagine glycosylation is present at Asn171. A helical membrane pass occupies residues 174 to 195 (FVIYMFIVHFLIPLIVIFFCYG). Topologically, residues 196-223 (RLLCAVKEAAAAQQESETTQRAEKEVSR) are cytoplasmic. Residues 224–245 (MVVIMVIGYLVCWLPYASVAWW) traverse the membrane as a helical segment. Residues 246–257 (IFCNQGSEFGPI) are Extracellular-facing. The chain crosses the membrane as a helical span at residues 258-279 (FMTLPAFFAKSPAIYNPLIYIC). At Lys267 the chain carries N6-(retinylidene)lysine. The Cytoplasmic portion of the chain corresponds to 280–289 (MNKQFPHCMI).

It belongs to the G-protein coupled receptor 1 family. Opsin subfamily. In terms of processing, phosphorylated on some or all of the serine and threonine residues present in the C-terminal region. Contains one covalently linked retinal chromophore.

It localises to the membrane. Its subcellular location is the cell projection. The protein resides in the cilium. The protein localises to the photoreceptor outer segment. Photoreceptor required for image-forming vision at low light intensity. While most salt water fish species use retinal as chromophore, most freshwater fish use 3-dehydroretinal, or a mixture of retinal and 3-dehydroretinal. Light-induced isomerization of 11-cis to all-trans retinal triggers a conformational change that activates signaling via G-proteins. Subsequent receptor phosphorylation mediates displacement of the bound G-protein alpha subunit by arrestin and terminates signaling. The protein is Rhodopsin (rho) of Leocottus kesslerii (Kessler's sculpin).